We begin with the raw amino-acid sequence, 60 residues long: Large ribosomal subunit protein bL32 (60 aa).

The segment at 1 to 60 is disordered; sequence MAVQQNKKSRSARDMRRSHDALEPNALSVEKSTGEVHLRHHVSPDGFYRGRKVIDKGADE. Residues 11–22 are compositionally biased toward basic and acidic residues; it reads SARDMRRSHDAL.

This sequence belongs to the bacterial ribosomal protein bL32 family.

The chain is Large ribosomal subunit protein bL32 from Stutzerimonas stutzeri (strain A1501) (Pseudomonas stutzeri).